The primary structure comprises 71 residues: Large ribosomal subunit protein bL31 (71 aa).

Cys16, Cys18, Cys37, and Cys40 together coordinate Zn(2+).

It belongs to the bacterial ribosomal protein bL31 family. Type A subfamily. Part of the 50S ribosomal subunit. The cofactor is Zn(2+).

In terms of biological role, binds the 23S rRNA. In Chromohalobacter salexigens (strain ATCC BAA-138 / DSM 3043 / CIP 106854 / NCIMB 13768 / 1H11), this protein is Large ribosomal subunit protein bL31.